Reading from the N-terminus, the 159-residue chain is Transcriptional repressor NrdR (159 aa).

Residues 3 to 34 fold into a zinc finger; sequence CPKCGYNKSSVVDSRQAEEGTTIRRRRECEKC. In terms of domain architecture, ATP-cone spans 49–139; it reads LLVIKKDGTR…VYKSFKDVDE (91 aa).

This sequence belongs to the NrdR family. Requires Zn(2+) as cofactor.

Functionally, negatively regulates transcription of bacterial ribonucleotide reductase nrd genes and operons by binding to NrdR-boxes. This chain is Transcriptional repressor NrdR, found in Streptococcus agalactiae serotype Ia (strain ATCC 27591 / A909 / CDC SS700).